A 103-amino-acid polypeptide reads, in one-letter code: Spherulin-3A (103 aa).

Positions 1–13 (MSVCKGVSGNPAK) are N-terminal arm. Beta/gamma crystallin 'Greek key' domains follow at residues 14-55 (GEVF…KVGP) and 57-99 (TKAF…IVAT).

The protein belongs to the beta/gamma-crystallin family.

The protein resides in the cytoplasm. In terms of biological role, structural protein. The chain is Spherulin-3A from Physarum polycephalum (Slime mold).